We begin with the raw amino-acid sequence, 270 residues long: Regulatory protein RecX (270 aa).

The protein belongs to the RecX family.

It is found in the cytoplasm. Modulates RecA activity. This chain is Regulatory protein RecX, found in Bacillus cereus (strain AH187).